A 116-amino-acid chain; its full sequence is uncharacterized protein (116 aa).

This is an uncharacterized protein from Saccharolobus islandicus (Sulfolobus islandicus).